The following is a 360-amino-acid chain: Teichoic acids export ATP-binding protein TagH (360 aa).

One can recognise an ABC transporter domain in the interval 24–245; sequence LKAMFFPKTR…YEDYINWFNK (222 aa). Position 59-66 (59-66) interacts with ATP; it reads GINGSGKS. The segment at 246–360 is unknown; sequence LSKEEKEAHK…GDIDNSDVSL (115 aa). The segment at 270–290 is disordered; sequence EEQENGKAGSGGDGTQPIVQP.

It belongs to the ABC transporter superfamily. Teichoic acids exporter (TC 3.A.1.104.1) family. The complex is composed of two ATP-binding proteins (TagH) and two transmembrane proteins (TagG).

Its subcellular location is the cell membrane. The catalysed reaction is ATP + H2O + teichoic acidSide 1 = ADP + phosphate + teichoic acidSide 2.. Functionally, part of the ABC transporter complex TagGH involved in teichoic acids export. Responsible for energy coupling to the transport system. This chain is Teichoic acids export ATP-binding protein TagH, found in Shouchella clausii (strain KSM-K16) (Alkalihalobacillus clausii).